Reading from the N-terminus, the 1027-residue chain is Translation initiation factor IF-2 (1027 aa).

Residues 31-433 form a disordered region; it reads YVKSASSTVE…GGVRLPRGNG (403 aa). Gly residues predominate over residues 57–68; the sequence is KKGGGDSNGRAG. A compositionally biased stretch (pro residues) spans 110–122; that stretch reads GPKPGPKPGPKAP. Residues 123–145 show a composition bias toward low complexity; it reads APETKPFEEAPAPAAKADAPAQP. Positions 148 to 171 are enriched in basic and acidic residues; sequence EQPRSEQPRSEQPRSEQPRSERSG. Composition is skewed to pro residues over residues 174–188 and 201–212; these read PGGPKPGPKPGPKPG and PPKPQSPKPGPR. Residues 237-268 show a composition bias toward gly residues; sequence PGGGQRQGGQGPGRGGPQGGRPDRQGGGGQGA. A compositionally biased stretch (pro residues) spans 293–302; the sequence is GMMPPRPNPG. Residues 311-397 are compositionally biased toward gly residues; sequence SGGGPGGGRG…GAAGAFGRPG (87 aa). Residues 401-410 show a composition bias toward basic residues; the sequence is RRGRKSKRQK. Residues 523–695 form the tr-type G domain; that stretch reads SRPPVVTVMG…ILLTADATLD (173 aa). The tract at residues 532 to 539 is G1; that stretch reads GHVDHGKT. A GTP-binding site is contributed by 532 to 539; that stretch reads GHVDHGKT. Residues 557-561 are G2; the sequence is GITQH. A G3 region spans residues 582-585; that stretch reads DTPG. GTP is bound by residues 582-586 and 636-639; these read DTPGH and NKID. The tract at residues 636–639 is G4; that stretch reads NKID. The segment at 672-674 is G5; it reads SAR.

Belongs to the TRAFAC class translation factor GTPase superfamily. Classic translation factor GTPase family. IF-2 subfamily.

The protein resides in the cytoplasm. Functionally, one of the essential components for the initiation of protein synthesis. Protects formylmethionyl-tRNA from spontaneous hydrolysis and promotes its binding to the 30S ribosomal subunits. Also involved in the hydrolysis of GTP during the formation of the 70S ribosomal complex. This chain is Translation initiation factor IF-2, found in Saccharopolyspora erythraea (strain ATCC 11635 / DSM 40517 / JCM 4748 / NBRC 13426 / NCIMB 8594 / NRRL 2338).